Reading from the N-terminus, the 410-residue chain is MPGVCDRAPDFLSPSEDQVLRPALGSSVALNCTAWVVSGPHCSLPSVQWLKDGLPLGIGGHYSLHEYSWVKANLSEVLVSSVLGVNVTSTEVYGAFTCSIQNISFSSFTLQRAGPTSHVAAVLASLLVLLALLLAALLYVKCRLNVLLWYQDAYGEVEINDGKLYDAYVSYSDCPEDRKFVNFILKPQLERRRGYKLFLDDRDLLPRAEPSADLLVNLSRCRRLIVVLSDAFLSRAWCSHSFREGLCRLLELTRRPIFITFEGQRRDPAHPALRLLRQHRHLVTLLLWRPGSVTPSSDFWKEVQLALPRKVQYRPVEGDPQTQLQDDKDPMLILRGRVPEGRALDSEVDPDPEGDLGVRGPVFGEPSAPPHTSGVSLGESRSSEVDVSDLGSRNYSARTDFYCLVSKDDM.

The Extracellular portion of the chain corresponds to 1-118 (MPGVCDRAPD…TLQRAGPTSH (118 aa)). The region spanning 9 to 109 (PDFLSPSEDQ…IQNISFSSFT (101 aa)) is the Ig-like C2-type domain. Asparagine 31, asparagine 73, asparagine 86, and asparagine 102 each carry an N-linked (GlcNAc...) asparagine glycan. A disulfide bridge links cysteine 32 with cysteine 98. The chain crosses the membrane as a helical; Signal-anchor for type III membrane protein span at residues 119–139 (VAAVLASLLVLLALLLAALLY). The Cytoplasmic portion of the chain corresponds to 140–410 (VKCRLNVLLW…FYCLVSKDDM (271 aa)). In terms of domain architecture, TIR spans 163–307 (KLYDAYVSYS…DFWKEVQLAL (145 aa)). The disordered stretch occupies residues 340–390 (EGRALDSEVDPDPEGDLGVRGPVFGEPSAPPHTSGVSLGESRSSEVDVSDL). A Phosphoserine modification is found at serine 383.

Belongs to the interleukin-1 receptor family. Interacts with IL1R1, IRAK1, TLR4, TLR5, TLR9 and TRAF6. Upon IL-1 stimulation found in a complex at least composed of IL1R1, SIGIRR, MYD88, IRAK1 and TRAF6. Upon stimulation with LPC found in a complex at least composed of TLR4, SIG1IR, MYD88, IRAK1 and TRAF6. Interacts with PALM3. In terms of tissue distribution, mainly expressed in epithelial tissues such as kidney, lung and gut.

Its subcellular location is the membrane. Its function is as follows. Acts as a negative regulator of the Toll-like and IL-1R receptor signaling pathways. Attenuates the recruitment of receptor-proximal signaling components to the TLR4 receptor, probably through an TIR-TIR domain interaction with TLR4. Through its extracellular domain interferes with the heterodimerization of Il1R1 and IL1RAP. The chain is Single Ig IL-1-related receptor (SIGIRR) from Homo sapiens (Human).